The sequence spans 796 residues: Leucine--tRNA ligase (796 aa).

The 'HIGH' region signature appears at 40–51 (PYPSASGLHVGH). The 'KMSKS' region signature appears at 569-573 (KMSKS). K572 serves as a coordination point for ATP.

It belongs to the class-I aminoacyl-tRNA synthetase family.

It is found in the cytoplasm. The enzyme catalyses tRNA(Leu) + L-leucine + ATP = L-leucyl-tRNA(Leu) + AMP + diphosphate. The protein is Leucine--tRNA ligase of Bdellovibrio bacteriovorus (strain ATCC 15356 / DSM 50701 / NCIMB 9529 / HD100).